Here is a 432-residue protein sequence, read N- to C-terminus: RING finger protein 44 (432 aa).

Residues 1 to 86 (MRPWALAVTR…GGSPRMLHPA (86 aa)) form a disordered region. The segment covering 56 to 65 (QQPPSRPPHL) has biased composition (pro residues). The RING-type; atypical zinc-finger motif lies at 380 to 421 (CVVCFSDFEARQLLRVLPCNHEFHTKCVDKWLKANRTCPICR).

The protein is RING finger protein 44 (RNF44) of Homo sapiens (Human).